A 363-amino-acid chain; its full sequence is Guanine nucleotide-binding protein alpha-11 subunit (363 aa).

Positions 26–363 constitute a G-alpha domain; it reads KMLKILLLGG…KISMEKVGFM (338 aa). Positions 29-42 are G1 motif; sequence KILLLGGPECGKST. GTP contacts are provided by residues 34–41, 172–178, 197–201, 276–279, and alanine 335; these read GGPECGKS, LRARVPT, DVGGQ, and NKID. Residues serine 41 and threonine 178 each contribute to the Mg(2+) site. The segment at 170–178 is G2 motif; that stretch reads DVLRARVPT. A G3 motif region spans residues 193 to 202; that stretch reads LRMVDVGGQR. Residues 272-279 form a G4 motif region; it reads ILFLNKID. Residues 333 to 338 form a G5 motif region; sequence TNATDT.

It belongs to the G-alpha family. G proteins are composed of 3 units; alpha, beta and gamma. The alpha chain contains the guanine nucleotide binding site. In terms of tissue distribution, expressed in ADL and ASH neurons.

Functionally, guanine nucleotide-binding proteins (G proteins) are involved as modulators or transducers in various transmembrane signaling systems. Mediates the transduction of food and serotonin signals, which modulates the avoidance response to the odorant octanol. Has a role in lifespan to promote longevity. This Caenorhabditis elegans protein is Guanine nucleotide-binding protein alpha-11 subunit (gpa-11).